A 332-amino-acid polypeptide reads, in one-letter code: 2-oxoglutarate-dependent dioxygenase ecdK (332 aa).

The Fe2OG dioxygenase domain occupies 178 to 294 (HASELRLNHY…RRSVAFFLKP (117 aa)). Positions 206, 208, and 266 each coordinate Fe cation. Position 285 (arginine 285) interacts with 2-oxoglutarate.

The protein belongs to the iron/ascorbate-dependent oxidoreductase family. It depends on Fe(2+) as a cofactor.

Its pathway is antifungal biosynthesis. 2-oxoglutarate-dependent dioxygenase; part of the gene cluster that mediates the biosynthesis of echinocandin B, a fungal lipidated cyclic hexapeptide that acts as an antifungal agent. Linoleoyl-AMP, produced by the fatty-acyl-AMP ligase ecdI, is transferred to the initiation carrier domain (T0) of ecdA. The linoleoyl-S-phosphopantetheinyl-T0 is sequentially extended with L-ornithine, L-threonine, L-proline, L-homotyrosine, L-threonine, and 4R-methyl-L-proline to form the linear hexapeptide. Thereafter, the terminal condensation (C7) performs macrocyclization of the NRPS product and the cyclic scaffold is released from ecdA. All six of the amino acid residues are hydroxylated, including 4R,5R-dihydroxy-L-ornithine, 4R-hydroxyl-L-proline, 3S,4S-dihydroxy-L-homotyrosine, and 3S-hydroxyl-4S-methyl-L-prolin. In the pathway, all the hydroxylation reactions are proposed to occur following completion of the cyclic peptide, so the unhydroxylated precursor produced by ecdA will undergo six rounds of hydroxylation. Five hydroxylase genes (ecdG, ecdH, ecdK, htyE and htyF) are embedded within the echinocandin B (ecd) and L-homotyrosine (hty) clusters. The sequence is that of 2-oxoglutarate-dependent dioxygenase ecdK from Aspergillus rugulosus (Emericella rugulosa).